A 230-amino-acid chain; its full sequence is Lactate utilization protein C (230 aa).

The protein belongs to the LutC/YkgG family.

Is involved in L-lactate degradation and allows cells to grow with lactate as the sole carbon source. The polypeptide is Lactate utilization protein C (Halalkalibacterium halodurans (strain ATCC BAA-125 / DSM 18197 / FERM 7344 / JCM 9153 / C-125) (Bacillus halodurans)).